A 965-amino-acid polypeptide reads, in one-letter code: Villin-3 (965 aa).

Gelsolin-like repeat units follow at residues 27 to 79, 150 to 190, 262 to 304, 401 to 452, 533 to 573, and 635 to 676; these read ENFE…DEAG, VHLK…QERA, GQVE…EERK, ANSK…EDQE, NKAL…EQQE, and FQVE…KEKQ. Low complexity-rich tracts occupy residues 769-780 and 808-828; these read AFNSSSGRTSSP and SSPS…ASQR. Disordered stretches follow at residues 769 to 828 and 840 to 906; these read AFNS…ASQR and TAEK…GVTF. Acidic residues predominate over residues 865–879; the sequence is EATEEATEAKEEEEV. Phosphoserine is present on Ser880. Residues 900 to 965 form the HP domain; sequence ETTGVTFTYE…DLLKKKFNLF (66 aa).

The protein belongs to the villin/gelsolin family. Expressed in all tissues examined, including root hairs.

The protein resides in the cytoplasm. The protein localises to the cytoskeleton. Functionally, binds actin and actin filament bundles in a Ca(2+)-insensitive manner, but severs actin filaments in a calcium-dependent manner, regardless of the presence or not of VLN1 (AC O81643). Acts redundantly with VLN2 (AC O81644) to generate thick actin filament bundles, to regulate directional organ growth and in sclerenchyma development. This is Villin-3 from Arabidopsis thaliana (Mouse-ear cress).